A 122-amino-acid chain; its full sequence is Large ribosomal subunit protein uL14 (122 aa).

This sequence belongs to the universal ribosomal protein uL14 family. As to quaternary structure, part of the 50S ribosomal subunit. Forms a cluster with proteins L3 and L19. In the 70S ribosome, L14 and L19 interact and together make contacts with the 16S rRNA in bridges B5 and B8.

Functionally, binds to 23S rRNA. Forms part of two intersubunit bridges in the 70S ribosome. The sequence is that of Large ribosomal subunit protein uL14 from Sphingopyxis alaskensis (strain DSM 13593 / LMG 18877 / RB2256) (Sphingomonas alaskensis).